We begin with the raw amino-acid sequence, 153 residues long: UPF0178 protein CC_1215 (153 aa).

It belongs to the UPF0178 family.

This chain is UPF0178 protein CC_1215, found in Caulobacter vibrioides (strain ATCC 19089 / CIP 103742 / CB 15) (Caulobacter crescentus).